Consider the following 432-residue polypeptide: Adenylosuccinate synthetase (432 aa).

GTP is bound by residues 12–18 (GDEGKGK) and 40–42 (GHT). The active-site Proton acceptor is Asp13. Residues Asp13 and Gly40 each coordinate Mg(2+). IMP contacts are provided by residues 13 to 16 (DEGK), 38 to 41 (NAGH), Thr132, Arg146, Gln226, Thr241, and Arg305. Residue His41 is the Proton donor of the active site. 301 to 307 (TVTGRKR) contacts substrate. GTP is bound by residues Arg307, 333 to 335 (KLD), and 415 to 417 (STS).

This sequence belongs to the adenylosuccinate synthetase family. In terms of assembly, homodimer. The cofactor is Mg(2+).

The protein localises to the cytoplasm. The enzyme catalyses IMP + L-aspartate + GTP = N(6)-(1,2-dicarboxyethyl)-AMP + GDP + phosphate + 2 H(+). The protein operates within purine metabolism; AMP biosynthesis via de novo pathway; AMP from IMP: step 1/2. In terms of biological role, plays an important role in the de novo pathway of purine nucleotide biosynthesis. Catalyzes the first committed step in the biosynthesis of AMP from IMP. The chain is Adenylosuccinate synthetase from Chelativorans sp. (strain BNC1).